The sequence spans 308 residues: Pyrroline-5-carboxylate reductase 3 (308 aa).

It belongs to the pyrroline-5-carboxylate reductase family. As to quaternary structure, homodecamer; composed of 5 homodimers.

The protein localises to the cytoplasm. It catalyses the reaction L-proline + NADP(+) = (S)-1-pyrroline-5-carboxylate + NADPH + 2 H(+). The catalysed reaction is L-proline + NAD(+) = (S)-1-pyrroline-5-carboxylate + NADH + 2 H(+). It functions in the pathway amino-acid biosynthesis; L-proline biosynthesis; L-proline from L-glutamate 5-semialdehyde: step 1/1. Functionally, oxidoreductase that catalyzes the last step in proline biosynthesis, which corresponds to the reduction of pyrroline-5-carboxylate (P5C) to L-proline using NAD(P)H. Proline is synthesized from either glutamate or ornithine; both are converted to P5C, and then to proline via pyrroline-5-carboxylate reductases (PYCRs). PYCR3 is exclusively linked to the biosynthesis of proline from ornithine. This Bos taurus (Bovine) protein is Pyrroline-5-carboxylate reductase 3.